The following is a 135-amino-acid chain: uncharacterized protein (135 aa).

The helical transmembrane segment at Val35 to Ser55 threads the bilayer.

The protein resides in the membrane. This is an uncharacterized protein from Saccharomyces cerevisiae (strain ATCC 204508 / S288c) (Baker's yeast).